A 184-amino-acid polypeptide reads, in one-letter code: Chromophore lyase CpcS/CpeS 1 (184 aa).

The protein belongs to the CpcS/CpeS biliprotein lyase family.

In terms of biological role, covalently attaches a chromophore to Cys residue(s) of phycobiliproteins. This chain is Chromophore lyase CpcS/CpeS 1, found in Synechococcus sp. (strain JA-3-3Ab) (Cyanobacteria bacterium Yellowstone A-Prime).